The chain runs to 251 residues: Lactose phosphotransferase system repressor (251 aa).

Residues 3 to 58 (KYDRLDEITKLVNKRGSVRTNEIVEDLNVSDMTVRRDLAELEEKGVLTKIHGGARS) form the HTH deoR-type domain. The segment at residues 20–39 (VRTNEIVEDLNVSDMTVRRD) is a DNA-binding region (H-T-H motif).

Repressor of the lactose catabolism operon. Galactose-6-phosphate is the inducer. This chain is Lactose phosphotransferase system repressor (lacR), found in Staphylococcus epidermidis (strain ATCC 35984 / DSM 28319 / BCRC 17069 / CCUG 31568 / BM 3577 / RP62A).